Here is a 459-residue protein sequence, read N- to C-terminus: Type IV methyl-directed restriction enzyme EcoKMcrB subunit (459 aa).

GTP contacts are provided by residues 201 to 208, 300 to 303, and 333 to 336; these read GPPGVGKT, DKRG, and NTAD.

Its function is as follows. Recognizes N4- and C5-methylcytosine (and 5-hydroxy-methylcytosines) produced by a broad range of DNA methylases and appears to act against 5-methylcytosine preceded by a purine residue. Binds to DNA containing methylated cytosines; also binds to GTP. Isoform 33 kDa is less active than isoform 51 kDa and may play a role in regulating the activity of isoform 51 kDa by competing with it in DNA and protein binding abilities. The protein is Type IV methyl-directed restriction enzyme EcoKMcrB subunit (mcrB) of Escherichia coli (strain K12).